The primary structure comprises 121 residues: Small ribosomal subunit protein uS13 (121 aa).

Residues R93–K121 form a disordered region. Basic residues predominate over residues A106–K121.

It belongs to the universal ribosomal protein uS13 family. In terms of assembly, part of the 30S ribosomal subunit. Forms a loose heterodimer with protein S19. Forms two bridges to the 50S subunit in the 70S ribosome.

Its function is as follows. Located at the top of the head of the 30S subunit, it contacts several helices of the 16S rRNA. In the 70S ribosome it contacts the 23S rRNA (bridge B1a) and protein L5 of the 50S subunit (bridge B1b), connecting the 2 subunits; these bridges are implicated in subunit movement. Contacts the tRNAs in the A and P-sites. This chain is Small ribosomal subunit protein uS13, found in Bacillus licheniformis (strain ATCC 14580 / DSM 13 / JCM 2505 / CCUG 7422 / NBRC 12200 / NCIMB 9375 / NCTC 10341 / NRRL NRS-1264 / Gibson 46).